We begin with the raw amino-acid sequence, 302 residues long: Protein translocase subunit SecF (302 aa).

Transmembrane regions (helical) follow at residues 12 to 32 (FFIY…FVKG), 138 to 158 (YAWY…TIRF), 166 to 186 (AILA…LFGI), 190 to 210 (LTAI…TIVV), 249 to 269 (FLVV…FAFG), and 272 to 292 (VGVI…VIGM).

It belongs to the SecD/SecF family. SecF subfamily. In terms of assembly, forms a complex with SecD. Part of the essential Sec protein translocation apparatus which comprises SecA, SecYEG and auxiliary proteins SecDF. Other proteins may also be involved.

It is found in the cell inner membrane. In terms of biological role, part of the Sec protein translocase complex. Interacts with the SecYEG preprotein conducting channel. SecDF uses the proton motive force (PMF) to complete protein translocation after the ATP-dependent function of SecA. The chain is Protein translocase subunit SecF from Petrotoga mobilis (strain DSM 10674 / SJ95).